The primary structure comprises 443 residues: Leucine/methionine racemase (443 aa).

Residues 110-111 (GS) and Gln-247 each bind pyridoxal 5'-phosphate. N6-(pyridoxal phosphate)lysine is present on Lys-273. Thr-302 serves as a coordination point for pyridoxal 5'-phosphate.

Belongs to the class-III pyridoxal-phosphate-dependent aminotransferase family. Pyridoxal 5'-phosphate serves as cofactor.

The catalysed reaction is L-leucine = D-leucine. It catalyses the reaction L-methionine = D-methionine. Its activity is regulated as follows. Activity is strongly inhibited by several metal ions, including Co(2+), Zn(2+), Ni(2+), Cu(2+) and Fe(3+), and nonsubstrate amino acids such as L-arginine and L-lysine. Activity is completely abolished in the presence of hydroxylamine, an inhibitor of pyridoxal phosphate-dependent enzymes. Amino acid racemase with moderate substrate specificity. Is primarily active toward leucine, which is the preferred substrate, and methionine. Also exhibits lower levels of activity toward phenylalanine, alanine and serine. The polypeptide is Leucine/methionine racemase (Thermococcus litoralis (strain ATCC 51850 / DSM 5473 / JCM 8560 / NS-C)).